Here is a 185-residue protein sequence, read N- to C-terminus: Ribosome-recycling factor (185 aa).

The protein belongs to the RRF family.

It localises to the cytoplasm. Its function is as follows. Responsible for the release of ribosomes from messenger RNA at the termination of protein biosynthesis. May increase the efficiency of translation by recycling ribosomes from one round of translation to another. The protein is Ribosome-recycling factor of Aliivibrio fischeri (strain MJ11) (Vibrio fischeri).